We begin with the raw amino-acid sequence, 311 residues long: Insulin-like growth factor-binding protein 2 (311 aa).

Positions 1 to 36 (MALGGVGRGGAARAAWPRLLLAALAPALALAGPALP) are cleaved as a signal peptide. The IGFBP N-terminal domain occupies 38 to 120 (VLFRCPPCTA…VQGQGTCARP (83 aa)). 6 disulfides stabilise this stretch: Cys-42–Cys-70, Cys-45–Cys-72, Cys-53–Cys-73, Cys-61–Cys-76, Cys-84–Cys-97, and Cys-91–Cys-117. 2 disordered regions span residues 112–168 (QGQG…PLKT) and 188–210 (GKVG…TGRT). Residues 209 to 291 (RTPCQQELDQ…APTIRGDPEC (83 aa)) form the Thyroglobulin type-1 domain. Cystine bridges form between Cys-212–Cys-246, Cys-257–Cys-268, and Cys-270–Cys-291. A Cell attachment site motif is present at residues 286–288 (RGD).

In terms of assembly, binds IGF2 more than IGF1.

It localises to the secreted. Inhibits IGF-mediated growth and developmental rates. IGF-binding proteins prolong the half-life of the IGFs and have been shown to either inhibit or stimulate the growth promoting effects of the IGFs on cell culture. They alter the interaction of IGFs with their cell surface receptors. This Gallus gallus (Chicken) protein is Insulin-like growth factor-binding protein 2 (IGFBP2).